A 545-amino-acid polypeptide reads, in one-letter code: Chaperonin GroEL 2 (545 aa).

Residues 30–33 (TLGP), K51, 87–91 (DGTTT), G415, and D496 each bind ATP.

Belongs to the chaperonin (HSP60) family. In terms of assembly, forms a cylinder of 14 subunits composed of two heptameric rings stacked back-to-back. Interacts with the co-chaperonin GroES.

It is found in the cytoplasm. The catalysed reaction is ATP + H2O + a folded polypeptide = ADP + phosphate + an unfolded polypeptide.. Together with its co-chaperonin GroES, plays an essential role in assisting protein folding. The GroEL-GroES system forms a nano-cage that allows encapsulation of the non-native substrate proteins and provides a physical environment optimized to promote and accelerate protein folding. In Nitrobacter winogradskyi (strain ATCC 25391 / DSM 10237 / CIP 104748 / NCIMB 11846 / Nb-255), this protein is Chaperonin GroEL 2.